A 727-amino-acid polypeptide reads, in one-letter code: Anaphase-promoting complex subunit 5 (727 aa).

Ser180 is subject to Phosphoserine. TPR repeat units lie at residues 194 to 234 (QKQA…FNPD), 235 to 285 (FAEA…GRSL), 286 to 322 (RYAA…SNDH), 323 to 359 (VCLQ…FGLP), 360 to 390 (RAFA…SELI), 391 to 438 (DISI…TESF), 439 to 472 (AVAL…FPPN), 473 to 512 (SQHA…ALNG), 513 to 552 (IEGV…TEMV), 553 to 592 (ISVL…QYLA), 593 to 632 (SETV…ILDK), 633 to 668 (GRAM…NLTE), and 669 to 708 (AKNY…CAMV). Thr217 is subject to Phosphothreonine.

The protein belongs to the APC5 family. The mammalian APC/C is composed at least of 14 distinct subunits ANAPC1, ANAPC2, CDC27/APC3, ANAPC4, ANAPC5, CDC16/APC6, ANAPC7, CDC23/APC8, ANAPC10, ANAPC11, CDC26/APC12, ANAPC13, ANAPC15 and ANAPC16 that assemble into a complex of at least 19 chains with a combined molecular mass of around 1.2 MDa; APC/C interacts with FZR1 and FBXO5.

It is found in the nucleus. The protein resides in the cytoplasm. It localises to the cytoskeleton. The protein localises to the spindle. It participates in protein modification; protein ubiquitination. In terms of biological role, component of the anaphase promoting complex/cyclosome (APC/C), a cell cycle-regulated E3 ubiquitin ligase that controls progression through mitosis and the G1 phase of the cell cycle. The APC/C complex acts by mediating ubiquitination and subsequent degradation of target proteins: it mainly mediates the formation of 'Lys-11'-linked polyubiquitin chains and, to a lower extent, the formation of 'Lys-48'- and 'Lys-63'-linked polyubiquitin chains. The APC/C complex catalyzes assembly of branched 'Lys-11'-/'Lys-48'-linked branched ubiquitin chains on target proteins. This is Anaphase-promoting complex subunit 5 (Anapc5) from Rattus norvegicus (Rat).